A 306-amino-acid polypeptide reads, in one-letter code: Homoserine kinase (306 aa).

An ATP-binding site is contributed by 84 to 94 (PAGLGLGSSGA).

The protein belongs to the GHMP kinase family. Homoserine kinase subfamily.

It localises to the cytoplasm. It catalyses the reaction L-homoserine + ATP = O-phospho-L-homoserine + ADP + H(+). The protein operates within amino-acid biosynthesis; L-threonine biosynthesis; L-threonine from L-aspartate: step 4/5. Functionally, catalyzes the ATP-dependent phosphorylation of L-homoserine to L-homoserine phosphate. In Sulfurisphaera tokodaii (strain DSM 16993 / JCM 10545 / NBRC 100140 / 7) (Sulfolobus tokodaii), this protein is Homoserine kinase.